Here is a 347-residue protein sequence, read N- to C-terminus: NADH-ubiquinone oxidoreductase chain 2 (347 aa).

A run of 10 helical transmembrane segments spans residues 13-33, 59-79, 96-116, 122-142, 149-169, 178-198, 201-221, 247-267, 274-294, and 323-343; these read IILG…WIGF, YFLT…TNLL, AVMT…FWVP, IPLS…LSVL, VSPT…GWGG, ILAY…AYNP, TLLN…LFMF, IMLS…WMII, ESLL…YFYM, and VPLL…APAL.

The protein belongs to the complex I subunit 2 family. Core subunit of respiratory chain NADH dehydrogenase (Complex I) which is composed of 45 different subunits. Interacts with TMEM242.

It is found in the mitochondrion inner membrane. The catalysed reaction is a ubiquinone + NADH + 5 H(+)(in) = a ubiquinol + NAD(+) + 4 H(+)(out). Its function is as follows. Core subunit of the mitochondrial membrane respiratory chain NADH dehydrogenase (Complex I) which catalyzes electron transfer from NADH through the respiratory chain, using ubiquinone as an electron acceptor. Essential for the catalytic activity and assembly of complex I. The protein is NADH-ubiquinone oxidoreductase chain 2 of Megaderma spasma (Lesser false vampire bat).